A 249-amino-acid chain; its full sequence is ATP synthase subunit a (249 aa).

Helical transmembrane passes span 33–53 (GQVIAVSWIVFAILIIASIAA), 92–112 (LPFIGTLFLFIFVSNWLGALI), 131–151 (INTTVALALLTSLAYFYAGIS), 196–216 (LVVAVLVFLVPLVVPLPLMAL), and 217–237 (GLFTSAIQALVFATLAGAYIH).

Belongs to the ATPase A chain family. F-type ATPases have 2 components, CF(1) - the catalytic core - and CF(0) - the membrane proton channel. CF(1) has five subunits: alpha(3), beta(3), gamma(1), delta(1), epsilon(1). CF(0) has four main subunits: a, b, b' and c.

It localises to the cellular thylakoid membrane. In terms of biological role, key component of the proton channel; it plays a direct role in the translocation of protons across the membrane. The protein is ATP synthase subunit a of Microcystis aeruginosa (strain NIES-843 / IAM M-2473).